A 253-amino-acid chain; its full sequence is CD151 antigen (253 aa).

Residues 1–18 (MGEFNEKKATCGTVCLKY) are Cytoplasmic-facing. Residues Cys-11 and Cys-15 are each lipidated (S-palmitoyl cysteine). Residues 19–39 (LLFTYNCCFWLAGLAVMAVGI) traverse the membrane as a helical segment. Topologically, residues 40-57 (WTLALKSDYISLLASSTY) are extracellular. The chain crosses the membrane as a helical span at residues 58 to 78 (LATAYILVVAGVVVMVTGVLG). The Cytoplasmic portion of the chain corresponds to 79 to 91 (CCATFKERRNLLR). A helical membrane pass occupies residues 92–112 (LYFILLLIIFLLEIIAGILAY). Residues 113–221 (VYYQQLNTEL…LETFIQEHLR (109 aa)) are Extracellular-facing. The N-linked (GlcNAc...) asparagine glycan is linked to Asn-159. The chain crosses the membrane as a helical span at residues 222–242 (VIGAVGIGIACVQVFGMIFTC). S-palmitoyl cysteine attachment occurs at residues Cys-242 and Cys-243. The Cytoplasmic portion of the chain corresponds to 243–253 (CLYRSLKLEHY).

This sequence belongs to the tetraspanin (TM4SF) family. As to quaternary structure, interacts with integrins ITGA3:ITGB1, ITGA5:ITGB1, ITGA3:ITGB1 and ITGA6:ITGB4 and with CD9 and CD181. Interacts (via the second extracellular domain) with integrin ITGAV:ITGB3. Interacts with ITGA3; this interaction modulates ITGA3 glycosylation pattern. Interacts with F11R. Interacts with RAC1 and CDC42; these interactions mediate physical association of RAC1 and CDC42 with integrin adhesion receptor complexes. In terms of processing, palmitoylated. Palmitoylation by ZDHHC2 regulates CD151 expression, association with other tetraspanin family proteins and function in cell adhesion. Post-translationally, ubiquitinated by RNF128 on lysine residues present in the tetraspanin amino terminus via 'Lys-48'-linked ubiquitin leading to proteasomal degradation.

The protein resides in the cell membrane. Its function is as follows. Structural component of specialized membrane microdomains known as tetraspanin-enriched microdomains (TERMs), which act as platforms for receptor clustering and signaling. Plays a role in various cellular and molecular mechanism through its association with both integrin and non-integrin proteins. These interactions facilitate critical cellular functions, including cell-to-cell communication, wound healing, platelet aggregation, trafficking, cell motility, and angiogenesis. Via interaction with JAM-A/F11R and integrin ITGA3:ITGB1, promotes the recruitment of signaling molecules such as RAC1, CDC42 and RhoGTPases to facilitate the polarization of epithelial cells and the reorganization of the actin cytoskeleton, which are critical steps in cell migration process. Regulates the glycosylation pattern of ITGA3:ITGB1 thereby modulating its activity. Plays an essential role in the maintenance of central laminin-binding integrin ITGA6:ITGB4-containing adhesion complexes. Essential for the proper assembly of the glomerular and tubular basement membranes in kidney. Contributes to T-cell activation by modulating integrin signaling leading to activation of downstream targets PTK2 and MAPK1/MAPK3. This chain is CD151 antigen (Cd151), found in Mus musculus (Mouse).